Consider the following 204-residue polypeptide: MQPISVITGRIVALPVQDIDTDQIIPARYLKVTDKSGLAEGLFYAWRFDADGKPNPDFVLNRPETQGATILVAGRNFGCGSSREHAPWALLGYGFKAVISPYFADIFRNNALKNGLLTVQVDDETYQQLVSLFDEDPTTTVTIDLAAQTVTLPDGRGVHFPIDPFTKHCLLHGVDQMGFLLNEEAAISAYEASRPARVVTTARS.

This sequence belongs to the LeuD family. LeuD type 1 subfamily. In terms of assembly, heterodimer of LeuC and LeuD.

The catalysed reaction is (2R,3S)-3-isopropylmalate = (2S)-2-isopropylmalate. It participates in amino-acid biosynthesis; L-leucine biosynthesis; L-leucine from 3-methyl-2-oxobutanoate: step 2/4. Its function is as follows. Catalyzes the isomerization between 2-isopropylmalate and 3-isopropylmalate, via the formation of 2-isopropylmaleate. This is 3-isopropylmalate dehydratase small subunit from Roseiflexus sp. (strain RS-1).